The primary structure comprises 93 residues: Protein FptB (93 aa).

Residues 1-25 (MPRQSGFGWAWRVPLALAGSLAAAT) form the signal peptide. The next 2 membrane-spanning stretches (helical) occupy residues 44–64 (LYAGLFGALGVGLLLLVGGLL) and 71–91 (FAWRLGGSLLVLGLALWLLAG).

The protein localises to the cell membrane. In terms of biological role, may play some role in transport of Fe(3+)-pyochelin. This chain is Protein FptB (fptB), found in Pseudomonas aeruginosa (strain ATCC 15692 / DSM 22644 / CIP 104116 / JCM 14847 / LMG 12228 / 1C / PRS 101 / PAO1).